The chain runs to 270 residues: tRNA pseudouridine synthase A (270 aa).

Asp60 serves as the catalytic Nucleophile. The interval 107–111 (FHARF) is RNA binding. Substrate is bound at residue Tyr118. The interaction with tRNA stretch occupies residues 168 to 172 (QCQSR).

It belongs to the tRNA pseudouridine synthase TruA family. As to quaternary structure, homodimer.

It carries out the reaction uridine(38/39/40) in tRNA = pseudouridine(38/39/40) in tRNA. Functionally, formation of pseudouridine at positions 38, 39 and 40 in the anticodon stem and loop of transfer RNAs. This is tRNA pseudouridine synthase A from Escherichia coli (strain 55989 / EAEC).